We begin with the raw amino-acid sequence, 427 residues long: Large ribosomal subunit protein uL4 (427 aa).

Ala-2 is subject to N-acetylalanine. At Lys-14 the chain carries N6-acetyllysine. Residue Arg-97 is modified to Omega-N-methylarginine. Residue Lys-106 is modified to N6-acetyllysine. Lys-239 participates in a covalent cross-link: Glycyl lysine isopeptide (Lys-Gly) (interchain with G-Cter in SUMO2). Lys-259 carries the N6-acetyllysine modification. Thr-266 is subject to Phosphothreonine. A phosphoserine mark is found at Ser-290 and Ser-295. Arg-300 is modified (citrulline). A Glycyl lysine isopeptide (Lys-Gly) (interchain with G-Cter in SUMO2) cross-link involves residue Lys-327. Lys-333 and Lys-353 each carry N6-acetyllysine. N6-acetyllysine; alternate is present on Lys-364. A Glycyl lysine isopeptide (Lys-Gly) (interchain with G-Cter in SUMO1); alternate cross-link involves residue Lys-364. Residue Ser-365 is modified to Phosphoserine. Residues 369–427 (AAVAGKKPVVGKKGKKAAVGVKKQKKPLVGKKAAATKKPAPEKKPAEKKPTTEEKKPAA) are disordered. Basic residues predominate over residues 377 to 397 (VVGKKGKKAAVGVKKQKKPLV). The segment covering 407–427 (PAPEKKPAEKKPTTEEKKPAA) has biased composition (basic and acidic residues).

It belongs to the universal ribosomal protein uL4 family. In terms of assembly, component of the large ribosomal subunit. May bind IPO9 with low affinity. Interacts with RBM3. Post-translationally, citrullinated by PADI4.

It localises to the cytoplasm. In terms of biological role, component of the large ribosomal subunit. The ribosome is a large ribonucleoprotein complex responsible for the synthesis of proteins in the cell. The chain is Large ribosomal subunit protein uL4 (RPL4) from Homo sapiens (Human).